The chain runs to 626 residues: Polypeptide N-acetylgalactosaminyltransferase 5 (626 aa).

Residues 1-11 (MIIFKKKAILK) are Cytoplasmic-facing. A helical; Signal-anchor for type II membrane protein transmembrane segment spans residues 12–31 (VLLLVPVFWICSLIFFAATS). Asn32 carries N-linked (GlcNAc...) asparagine glycosylation. Topologically, residues 32–626 (NDSSQIGSNN…AIEHGAKPPS (595 aa)) are lumenal. Cystine bridges form between Cys165-Cys399, Cys390-Cys466, Cys502-Cys521, Cys544-Cys557, and Cys583-Cys598. Positions 174–284 (LPRTSVIICF…EGWMEPLLDR (111 aa)) are catalytic subdomain A. Residues Asp215 and Arg245 each contribute to the substrate site. Asp268 lines the Mn(2+) pocket. A substrate-binding site is contributed by Ser269. His270 contacts Mn(2+). N-linked (GlcNAc...) asparagine glycosylation occurs at Asn338. The tract at residues 345–407 (PVRSPTMAGG…PCSHVGHVFR (63 aa)) is catalytic subdomain B. Position 376 (Trp376) interacts with substrate. Residue His404 coordinates Mn(2+). Residues Arg407 and Tyr412 each contribute to the substrate site. The Ricin B-type lectin domain maps to 488-610 (AKGEVRNSAV…DDPYQHWKFK (123 aa)).

This sequence belongs to the glycosyltransferase 2 family. GalNAc-T subfamily. It depends on Mn(2+) as a cofactor.

The protein localises to the golgi apparatus membrane. It catalyses the reaction L-seryl-[protein] + UDP-N-acetyl-alpha-D-galactosamine = a 3-O-[N-acetyl-alpha-D-galactosaminyl]-L-seryl-[protein] + UDP + H(+). The catalysed reaction is L-threonyl-[protein] + UDP-N-acetyl-alpha-D-galactosamine = a 3-O-[N-acetyl-alpha-D-galactosaminyl]-L-threonyl-[protein] + UDP + H(+). It participates in protein modification; protein glycosylation. Catalyzes the initial reaction in O-linked oligosaccharide biosynthesis, the transfer of an N-acetyl-D-galactosamine residue to a serine or threonine residue on the protein receptor. The sequence is that of Polypeptide N-acetylgalactosaminyltransferase 5 (gly-5) from Caenorhabditis elegans.